The sequence spans 227 residues: Cytochrome c oxidase subunit 2 (227 aa).

At 1-22 (MAYPFQLGLQDATSPIMEELMN) the chain is on the mitochondrial intermembrane side. Residues 23–44 (FHDHTLMIVFLISSLVLYIISL) traverse the membrane as a helical segment. Residues 45–60 (MLTTKLTHTSTMDAQE) are Mitochondrial matrix-facing. The chain crosses the membrane as a helical span at residues 61 to 81 (VETIWTILPAVILIMIALPSL). Over 82–227 (RILYMMDEIN…YFENWSASMI (146 aa)) the chain is Mitochondrial intermembrane. H161, C196, E198, C200, H204, and M207 together coordinate Cu cation. E198 contributes to the Mg(2+) binding site. Y218 is subject to Phosphotyrosine.

It belongs to the cytochrome c oxidase subunit 2 family. As to quaternary structure, component of the cytochrome c oxidase (complex IV, CIV), a multisubunit enzyme composed of 14 subunits. The complex is composed of a catalytic core of 3 subunits MT-CO1, MT-CO2 and MT-CO3, encoded in the mitochondrial DNA, and 11 supernumerary subunits COX4I, COX5A, COX5B, COX6A, COX6B, COX6C, COX7A, COX7B, COX7C, COX8 and NDUFA4, which are encoded in the nuclear genome. The complex exists as a monomer or a dimer and forms supercomplexes (SCs) in the inner mitochondrial membrane with NADH-ubiquinone oxidoreductase (complex I, CI) and ubiquinol-cytochrome c oxidoreductase (cytochrome b-c1 complex, complex III, CIII), resulting in different assemblies (supercomplex SCI(1)III(2)IV(1) and megacomplex MCI(2)III(2)IV(2)). Found in a complex with TMEM177, COA6, COX18, COX20, SCO1 and SCO2. Interacts with TMEM177 in a COX20-dependent manner. Interacts with COX20. Interacts with COX16. Requires Cu cation as cofactor.

The protein localises to the mitochondrion inner membrane. It catalyses the reaction 4 Fe(II)-[cytochrome c] + O2 + 8 H(+)(in) = 4 Fe(III)-[cytochrome c] + 2 H2O + 4 H(+)(out). Functionally, component of the cytochrome c oxidase, the last enzyme in the mitochondrial electron transport chain which drives oxidative phosphorylation. The respiratory chain contains 3 multisubunit complexes succinate dehydrogenase (complex II, CII), ubiquinol-cytochrome c oxidoreductase (cytochrome b-c1 complex, complex III, CIII) and cytochrome c oxidase (complex IV, CIV), that cooperate to transfer electrons derived from NADH and succinate to molecular oxygen, creating an electrochemical gradient over the inner membrane that drives transmembrane transport and the ATP synthase. Cytochrome c oxidase is the component of the respiratory chain that catalyzes the reduction of oxygen to water. Electrons originating from reduced cytochrome c in the intermembrane space (IMS) are transferred via the dinuclear copper A center (CU(A)) of subunit 2 and heme A of subunit 1 to the active site in subunit 1, a binuclear center (BNC) formed by heme A3 and copper B (CU(B)). The BNC reduces molecular oxygen to 2 water molecules using 4 electrons from cytochrome c in the IMS and 4 protons from the mitochondrial matrix. This is Cytochrome c oxidase subunit 2 (Mtco2) from Mus musculus (Mouse).